Consider the following 137-residue polypeptide: Large ribosomal subunit protein uL16 (137 aa).

Positions 1–14 are enriched in basic residues; it reads MLQPNRRKFRKEHK. The tract at residues 1–22 is disordered; that stretch reads MLQPNRRKFRKEHKGRNEGLAT.

It belongs to the universal ribosomal protein uL16 family. As to quaternary structure, part of the 50S ribosomal subunit.

Its function is as follows. Binds 23S rRNA and is also seen to make contacts with the A and possibly P site tRNAs. The polypeptide is Large ribosomal subunit protein uL16 (Dechloromonas aromatica (strain RCB)).